Reading from the N-terminus, the 620-residue chain is Probable translation initiation factor IF-2 (620 aa).

Acidic residues predominate over residues 1-10; that stretch reads MSDTDADADT. The segment at 1–29 is disordered; the sequence is MSDTDADADTDAVSTTETSMNADANANAD. Residues 11–29 are compositionally biased toward low complexity; the sequence is DAVSTTETSMNADANANAD. The tr-type G domain maps to 33-248; sequence LRTPIVAVLG…VLMGLSQRYM (216 aa). The segment at 42–49 is G1; sequence GHVDHGKT. 42–49 serves as a coordination point for GTP; that stretch reads GHVDHGKT. The interval 67-71 is G2; the sequence is AITQH. The segment at 104–107 is G3; sequence DTPG. Residues 104–108 and 158–161 contribute to the GTP site; these read DTPGH and NKVD. The segment at 158 to 161 is G4; the sequence is NKVD. Residues 162–183 show a composition bias toward polar residues; that stretch reads TTPGWTPTDGSPIQPTYESQPS. The segment at 162-185 is disordered; that stretch reads TTPGWTPTDGSPIQPTYESQPSAA. The G5 stretch occupies residues 226-228; it reads SAI.

This sequence belongs to the TRAFAC class translation factor GTPase superfamily. Classic translation factor GTPase family. IF-2 subfamily.

Functionally, function in general translation initiation by promoting the binding of the formylmethionine-tRNA to ribosomes. Seems to function along with eIF-2. In Haloquadratum walsbyi (strain DSM 16790 / HBSQ001), this protein is Probable translation initiation factor IF-2.